We begin with the raw amino-acid sequence, 178 residues long: Fucolectin-1 (178 aa).

Positions Met-1–Ser-20 are cleaved as a signal peptide. The tract at residues Gln-29 to Asn-178 is F5/8 type C-like. The Ca(2+) site is built by Asp-59, Asn-61, and Ser-70. 3 disulfide bridges follow: Cys-71–Cys-167, Cys-103–Cys-104, and Cys-129–Cys-145. Alpha-L-fucose-binding residues include His-73 and Arg-100. The Cell attachment site signature appears at Arg-100–Asp-102. An alpha-L-fucose-binding site is contributed by Arg-107. Ca(2+) contacts are provided by Cys-167 and Glu-168.

The protein belongs to the fucolectin family. As to quaternary structure, homotrimer. Parenchymal hepatocytes.

It localises to the secreted. Its subcellular location is the extracellular space. Acts as a defensive agent. Recognizes blood group fucosylated oligosaccharides including A, B, H and Lewis B-type antigens. Does not recognize Lewis A antigen and has low affinity for monovalent haptens. The polypeptide is Fucolectin-1 (Anguilla japonica (Japanese eel)).